A 100-amino-acid polypeptide reads, in one-letter code: Urease subunit gamma (100 aa).

The protein belongs to the urease gamma subunit family. Heterotrimer of UreA (gamma), UreB (beta) and UreC (alpha) subunits. Three heterotrimers associate to form the active enzyme.

It is found in the cytoplasm. The catalysed reaction is urea + 2 H2O + H(+) = hydrogencarbonate + 2 NH4(+). It participates in nitrogen metabolism; urea degradation; CO(2) and NH(3) from urea (urease route): step 1/1. In Ralstonia pickettii (strain 12J), this protein is Urease subunit gamma.